The chain runs to 336 residues: UPF0065 protein in tcbD-tcbE intergenic region (336 aa).

Positions 1–32 (MHSSKCPDLANIGRRRVLAGIALAMTTSSTRA) are cleaved as a signal peptide.

The protein belongs to the UPF0065 (bug) family.

The protein localises to the periplasm. The chain is UPF0065 protein in tcbD-tcbE intergenic region from Pseudomonas sp. (strain P51).